Here is a 163-residue protein sequence, read N- to C-terminus: Peptidyl-prolyl cis-trans isomerase FKBP15-2 (163 aa).

The signal sequence occupies residues 1–25; it reads MASKMSLRYSLFLIFFSLISLQGFA. The region spanning 52-140 is the PPIase FKBP-type domain; sequence GDTIKVHYRG…IFDTELIAVN (89 aa). Positions 142 to 163 are disordered; sequence KPAGGEEYGGDEDDEGYGNDEL. Acidic residues predominate over residues 149–163; the sequence is YGGDEDDEGYGNDEL. Positions 160-163 match the Prevents secretion from ER motif; the sequence is NDEL.

This sequence belongs to the FKBP-type PPIase family.

The protein localises to the endoplasmic reticulum lumen. The enzyme catalyses [protein]-peptidylproline (omega=180) = [protein]-peptidylproline (omega=0). PPIases accelerate the folding of proteins. It catalyzes the cis-trans isomerization of proline imidic peptide bonds in oligopeptides. This is Peptidyl-prolyl cis-trans isomerase FKBP15-2 (FKBP15-2) from Arabidopsis thaliana (Mouse-ear cress).